The sequence spans 637 residues: Probable serine/threonine-protein kinase DDB_G0283065 (637 aa).

2 disordered regions span residues 36–88 (NNNN…KFNR) and 155–234 (NSNN…RFNN). Over residues 53 to 85 (NNSTTKSIDNNNNNTNNSNSNNNNNDNIKNNNK) the composition is skewed to low complexity. A Protein kinase domain is found at 236–629 (FNDVRVLGKG…NQISTDYDNF (394 aa)). ATP is bound by residues 242–250 (LGKGGFGIV) and K265. Residue D479 is the Proton acceptor of the active site.

Belongs to the protein kinase superfamily. Ser/Thr protein kinase family. GCN2 subfamily.

It carries out the reaction L-seryl-[protein] + ATP = O-phospho-L-seryl-[protein] + ADP + H(+). The enzyme catalyses L-threonyl-[protein] + ATP = O-phospho-L-threonyl-[protein] + ADP + H(+). This chain is Probable serine/threonine-protein kinase DDB_G0283065, found in Dictyostelium discoideum (Social amoeba).